A 358-amino-acid chain; its full sequence is Feruloyl CoA ortho-hydroxylase F6H1-1 (358 aa).

The region spanning 200 to 308 (TKESLLMGSK…RISVPIFVNP (109 aa)) is the Fe2OG dioxygenase domain. Residue Tyr-216 participates in 2-oxoglutarate binding. His-231, Asp-233, and His-289 together coordinate Fe cation. 2 residues coordinate 2-oxoglutarate: Arg-299 and Ser-301.

It belongs to the iron/ascorbate-dependent oxidoreductase family. L-ascorbate serves as cofactor. Fe(2+) is required as a cofactor.

The enzyme catalyses (E)-feruloyl-CoA + 2-oxoglutarate + O2 = (E)-6-hydroxyferuloyl-CoA + succinate + CO2. The protein operates within phenylpropanoid metabolism. Functionally, 2-oxoglutarate (OG)- and Fe(II)-dependent dioxygenase (2OGD) involved in scopoletin biosynthesis. Converts feruloyl CoA into 6'-hydroxyferuloyl CoA. This Ipomoea batatas (Sweet potato) protein is Feruloyl CoA ortho-hydroxylase F6H1-1.